The chain runs to 881 residues: NACHT, LRR and PYD domains-containing protein 6 (881 aa).

The region spanning 1 to 129 (MDAAGASCSS…EHVLRQHAKV (129 aa)) is the Pyrin domain. Residue S104 is modified to Phosphoserine. The interval 154–175 (AGEDELLGTSGEPEPERARRSD) is disordered. In terms of domain architecture, NACHT spans 194 to 510 (LTVVLQGPAG…EFLAALSYLL (317 aa)). 200–207 (GPAGIGKT) contacts ATP. The LRR 1 repeat unit spans residues 459–484 (EKDLERLKLQGSQVQTMFLSKKELPG). Residues 579–611 (QSQPKVATVGAEKKDELKDEEAEEEEEEEEEEE) form a disordered region. Positions 596–611 (KDEEAEEEEEEEEEEE) are enriched in acidic residues. LRR repeat units lie at residues 637 to 660 (LSSL…VLSY), 749 to 772 (APSL…LLSQ), and 839 to 863 (TLSL…TLKP).

The protein belongs to the NLRP family. As to quaternary structure, homomultimer; forms the NLRP6 inflammasome polymeric complex, a filament composed of homopolymers in response to pathogens and other damage-associated signals. The core of NLRP6 inflammasomes consists of a signal sensor component (NLRP6), an adapter (PYCARD/ASC), which recruits effector pro-inflammatory caspases (CASP1 and CASP4). Interacts (via pyrin domain) with PYCARD/ASC (via pyrin domain); interaction takes place following NLRP6 activation and formation of liquid-liquid phase separation (LLPS), initiating nucleation which greatly enhances further addition of soluble PYCARD/ASC molecules to the speck in a prion-like polymerization process. Clustered PYCARD/ASC nucleates the formation of CASP1 (or possibly CASP4) filaments through the interaction of their respective CARD domains, acting as a platform for CASP1 polymerization. CASP1 filament formation increases local enzyme concentration, resulting in trans-autocleavage and activation. Active CASP1 then processes IL1B and IL18 precursors, leading to the release of mature cytokines in the extracellular milieu and inflammatory response. Interacts with DHX15. Polyubiquitinated with 'Lys-63'-linked chains, promoting the interaction with PYCARD/ASC and formation of the NLRP6 inflammasome. Deubiquitination by CYLD decreases the interaction with PYCARD/ASC. Detected in several tissues. Expressed in renal epithelial cells in medullary thick ascending limb of Henle, as well as in salivary gland apical epithelium (at protein level). Isoform 1 is widely expressed. Isoform 2 is primarily expressed in kidney (at protein level).

It is found in the cytoplasm. The protein localises to the inflammasome. Its subcellular location is the cell membrane. It localises to the nucleus membrane. Its function is as follows. Acts as the sensor component of the NLRP6 inflammasome, which mediates inflammasome activation in response to various pathogen-associated signals, leading to maturation and secretion of IL1B and IL18. Inflammasomes are supramolecular complexes that assemble in the cytosol in response to pathogens and other damage-associated signals and play critical roles in innate immunity and inflammation. Acts as a recognition receptor (PRR): recognizes and binds specific pathogens and other damage-associated signals, such as lipoteichoic acid (LTA), a cell-wall component of Gram-positive bacteria, or double stranded RNA (dsRNA). May also recognize and bind lipopolysaccharide (LPS), a major component of the outer membrane of Gram-negative bacteria; however, LPS is probably not a major activator of the NLRP6 inflammasome. Following LTA- or dsRNA-binding, NLRP6 undergoes liquid-liquid phase separation (LLPS), enhancing multivalent interactions, an essential step for the formation of the NLRP6 inflammasome polymeric complex. The NLRP6 inflammasome acts by promoting recruitment of effector pro-inflammatory caspases (CASP1 and/or CASP4) that catalyze maturation and secretion of IL1B and IL18 in the extracellular milieu. The NLRP6 inflammasome plays a central role in the maintenance of epithelial integrity and host defense against microbial infections in the intestine. Required to restrict infection against Gram-positive bacteria by recognizing lipoteichoic acid (LTA), leading to recruitment of CASP4 and CASP1, and subsequent maturation and secretion of IL1B and IL18. Involved in intestinal antiviral innate immunity together with DHX15: recognizes and binds viral dsRNA to restrict infection by enteric viruses through the interferon pathway and GSDMD-dependent release of IL18. Required to prevent infection by the apicomplexan parasite Cryptosporidium in enterocytes by promoting GSDMD-dependent release of IL18. The NLRP6 inflammasome may also regulate the gut microbiota composition by acting as a sensor of microbiota-associated metabolites to form a PYCARD/ASC-dependent inflammasome for downstream IL18 release and secretion of antimicrobial peptides. Essential for gut mucosal self-renewal and proliferation. Regulate mucus secretion in an inflammasome- and autophagy-dependent manner to prevent invasion by enteric bacteria,. During systemic bacterial infections, the NLRP6 inflammasome negatively regulates neutrophil recruitment and neutrophil extracellular traps (NETs) formation. May promote peripheral nerve recovery following injury via an inflammasome-independent mechanism. The polypeptide is NACHT, LRR and PYD domains-containing protein 6 (Rattus norvegicus (Rat)).